The sequence spans 884 residues: Blastomere cadherin (884 aa).

The first 26 residues, 1–26 (MGGTDKFRYPSVWLCGLLCLLQVVPS), serve as a signal peptide directing secretion. Residues 27 to 157 (INVDVSGCQP…KHTGLKRKKR (131 aa)) constitute a propeptide that is removed on maturation. Cadherin domains lie at 158 to 265 (DWVI…RPKF), 266 to 378 (TQPV…APIF), 379 to 489 (DPKT…APVF), 490 to 595 (VPVV…DNGP), and 596 to 706 (VPSP…GFDL). Residues 158–706 (DWVIPPIKVS…QEKLVAGFDL (549 aa)) lie on the Extracellular side of the membrane. 3 N-linked (GlcNAc...) asparagine glycosylation sites follow: N427, N560, and N683. A helical membrane pass occupies residues 707–730 (PIILVILGSILALLILSLLLLLFL). Topologically, residues 731–884 (KRKKVVKEPL…YGGDDDDDEE (154 aa)) are cytoplasmic.

Expressed in pituitary gland, lung and kidney.

It localises to the cell membrane. Its function is as follows. Cadherins are calcium-dependent cell adhesion proteins. They preferentially interact with themselves in a homophilic manner in connecting cells; cadherins may thus contribute to the sorting of heterogeneous cell types. The polypeptide is Blastomere cadherin (Xenopus laevis (African clawed frog)).